A 376-amino-acid polypeptide reads, in one-letter code: Transcription initiation factor IIA subunit 1 (376 aa).

Position 2 is an N-acetylalanine (A2). Low complexity-rich tracts occupy residues 69 to 79 and 89 to 105; these read QVQQQHQPQQQ and QAQP…TQQV. 3 disordered regions span residues 69-107, 247-266, and 274-329; these read QVQQ…QVLI, QAQI…AQTQ, and DGTG…QELF. Residues S280, S281, S316, and S321 each carry the phosphoserine; by TAF1 modification. Over residues 280-329 the composition is skewed to acidic residues; the sequence is SSEEDEDEEEDYDDDEEEDKEKDGAEDGQVEEEPLNSEDDVSDEEGQELF. Positions 343 and 344 each coordinate DNA.

It belongs to the TFIIA subunit 1 family. In terms of assembly, TFIIA is a heterodimer of the large unprocessed subunit 1 and a small subunit gamma. It was originally believed to be a heterotrimer of an alpha (p35), a beta (p19) and a gamma subunit (p12). TFIIA forms a complex with TBP. Part of TBP-based Pol II pre-initiation complex (PIC), in which Pol II core assembles with general transcription factors and other specific initiation factors including GTF2E1, GTF2E2, GTF2F1, GTF2F2, TCEA1, ERCC2, ERCC3, GTF2H2, GTF2H3, GTF2H4, GTF2H5, GTF2A1, GTF2A2, GTF2B and TBP; this large multi-subunit PIC complex mediates DNA unwinding and targets Pol II core to the transcription start site where the first phosphodiester bond forms. Post-translationally, the alpha and beta subunits are postranslationally produced from the precursor form by TASP1. The cleavage promotes proteasomal degradation.

The protein localises to the nucleus. In terms of biological role, TFIIA is a component of the transcription machinery of RNA polymerase II and plays an important role in transcriptional activation. TFIIA in a complex with TBP mediates transcriptional activity. The sequence is that of Transcription initiation factor IIA subunit 1 (GTF2A1) from Homo sapiens (Human).